A 59-amino-acid polypeptide reads, in one-letter code: Putative zinc finger protein ORF59a (59 aa).

Residues 11–33 (YQCLRCGLTFRTKKQLIRHLVNT) form a C2H2-type; degenerate zinc finger.

The polypeptide is Putative zinc finger protein ORF59a (Acidianus hospitalis (AFV-1)).